Consider the following 33-residue polypeptide: GDCLPHLKRCKADNDCCGKKCKRRGTNAEKRCR.

Disulfide bonds link Cys-3/Cys-17, Cys-10/Cys-21, and Cys-16/Cys-32. 2 important for stimulation of [3H]ryanodine binding to RYR1 regions span residues 8–9 (KR) and 19–20 (KK). Positions 22–24 (KRR) are essential for stimulation of [3H]ryanodine binding to RYR1. Residues 25–27 (GTN) form an important for stimulation of [3H]ryanodine binding to RYR1 region.

It belongs to the scorpion calcin family. As to expression, expressed by the venom gland.

Its subcellular location is the secreted. Functionally, this toxin affects the activity of ryanodine receptors 1, 2 and 3 (RyR1, RyR2 and RyR3). At lower concentrations the toxin increases full openings of the RyRs, and at higher concentrations it inhibits full openings and induces openings to subconductance levels (30% of the full conductance state) and reduces the number of full conductance openings. The different actions may be attributed to the toxins binding at different sites on the RyRs, with binding at a high-affinity site mediating the increase in full openings and the induction of subconductance states evoked upon binding to a lower-affinity site. Furthermore, it triggers calcium release from sarcoplasmic vesicles (11.7 nM are enough to induce a sharp release, and 70% of the total calcium is released after toxin (100 nM) addition) probably by acting as a cell-penetrating peptide (CPP). In addition, it has been shown to dose-dependently stimulate ryanodine binding to RyR1 (EC(50)=8.7 nM). It also augments the bell-shaped calcium-[3H]ryanodine binding curve that is maximal at about 10 uM calcium concentration. It binds a different site as ryanodine. It acts synergistically with caffeine. In vivo, intracerebroventricular injection into mice induces neurotoxic symptoms, followed by death. The protein is Imperacalcin of Pandinus imperator (Emperor scorpion).